Consider the following 101-residue polypeptide: Small ribosomal subunit protein uS14 (101 aa).

It belongs to the universal ribosomal protein uS14 family. Part of the 30S ribosomal subunit. Contacts proteins S3 and S10.

Functionally, binds 16S rRNA, required for the assembly of 30S particles and may also be responsible for determining the conformation of the 16S rRNA at the A site. The chain is Small ribosomal subunit protein uS14 from Pseudomonas putida (strain GB-1).